Consider the following 102-residue polypeptide: uncharacterized protein (102 aa).

Residues 1 to 13 are compositionally biased toward low complexity; the sequence is PSSSQALSVPSLS. Residues 1–24 are disordered; it reads PSSSQALSVPSLSSEKKTASPTCV.

This is an uncharacterized protein from Human cytomegalovirus (strain AD169) (HHV-5).